Consider the following 338-residue polypeptide: Eukaryotic translation initiation factor 3 subunit H (338 aa).

Residues 22–154 (VQCDGLAVMK…LKAYRLTPQA (133 aa)) enclose the MPN domain.

It belongs to the eIF-3 subunit H family. As to quaternary structure, component of the eukaryotic translation initiation factor 3 (eIF-3) complex. The eIF-3 complex interacts with pix. Interacts with mxt.

The protein localises to the cytoplasm. In terms of biological role, component of the eukaryotic translation initiation factor 3 (eIF-3) complex, which is involved in protein synthesis of a specialized repertoire of mRNAs and, together with other initiation factors, stimulates binding of mRNA and methionyl-tRNAi to the 40S ribosome. The eIF-3 complex specifically targets and initiates translation of a subset of mRNAs involved in cell proliferation. The chain is Eukaryotic translation initiation factor 3 subunit H from Drosophila sechellia (Fruit fly).